The sequence spans 1009 residues: Anillin-like protein 2 (1009 aa).

Disordered regions lie at residues 1–29 (MYRR…DSNR), 272–295 (FGQE…QTIV), and 539–558 (GTGY…PTLV). The span at 542–557 (YSASSSGPQFTRSPTL) shows a compositional bias: polar residues. Positions 626-657 (SAADKINDSKRQISKLIETIEKTRKHIQLAEI) form a coiled coil. The 114-residue stretch at 892 to 1005 (DVEYRGFLYL…WLNAINDTLF (114 aa)) folds into the PH domain.

Localizes to the surface of the rachis.

Required to maintain the structure of the rachis, the central cytoplasmic core of the syncytial adult gonad. Failure to maintain the rachis leads to premature dissociation of oocytes and thereby impedes oogenesis. The protein is Anillin-like protein 2 (ani-2) of Caenorhabditis elegans.